The primary structure comprises 78 residues: Large ribosomal subunit protein bL31 (78 aa).

The protein belongs to the bacterial ribosomal protein bL31 family. Type A subfamily. As to quaternary structure, part of the 50S ribosomal subunit.

In terms of biological role, binds the 23S rRNA. This chain is Large ribosomal subunit protein bL31 (rpmE), found in Rickettsia felis (strain ATCC VR-1525 / URRWXCal2) (Rickettsia azadi).